The following is a 129-amino-acid chain: M-zodatoxin-Lt8b (129 aa).

Positions 1 to 20 (MKYFVVALALVAAFACIAES) are cleaved as a signal peptide. Residues 21 to 60 (KPAESEHELAEVEEENELADLEDAVWLEHLADLSDLEEAR) constitute a propeptide that is removed on maturation. A Processing quadruplet motif motif is present at residues 57–60 (EEAR).

Post-translationally, cleavage of the propeptide depends on the processing quadruplet motif (XXXR, with at least one of X being E). Expressed by the venom gland.

The protein localises to the secreted. Functionally, insecticidal, cytolytic and antimicrobial peptide. Forms voltage-dependent, ion-permeable channels in membranes. At high concentration causes cell membrane lysis. The sequence is that of M-zodatoxin-Lt8b (cit 1-2) from Lachesana tarabaevi (Spider).